A 256-amino-acid polypeptide reads, in one-letter code: Small ribosomal subunit protein uS3 (256 aa).

Residues 39–111 (IREFLNENFS…EVILNIIEVR (73 aa)) enclose the KH type-2 domain. The segment at 219–256 (DTRKPFEAGNQKRGQKRRPRNDQPGQRPQQRNRNSKED) is disordered. Residues 240–250 (DQPGQRPQQRN) show a composition bias toward low complexity.

It belongs to the universal ribosomal protein uS3 family. In terms of assembly, part of the 30S ribosomal subunit. Forms a tight complex with proteins S10 and S14.

Binds the lower part of the 30S subunit head. Binds mRNA in the 70S ribosome, positioning it for translation. This Acholeplasma laidlawii (strain PG-8A) protein is Small ribosomal subunit protein uS3.